A 289-amino-acid polypeptide reads, in one-letter code: Elongation factor Ts (289 aa).

The involved in Mg(2+) ion dislocation from EF-Tu stretch occupies residues 82 to 85 (TDFL).

It belongs to the EF-Ts family.

Its subcellular location is the cytoplasm. In terms of biological role, associates with the EF-Tu.GDP complex and induces the exchange of GDP to GTP. It remains bound to the aminoacyl-tRNA.EF-Tu.GTP complex up to the GTP hydrolysis stage on the ribosome. The sequence is that of Elongation factor Ts from Pseudomonas paraeruginosa (strain DSM 24068 / PA7) (Pseudomonas aeruginosa (strain PA7)).